The following is a 134-amino-acid chain: Large ribosomal subunit protein bL17 (134 aa).

It belongs to the bacterial ribosomal protein bL17 family. In terms of assembly, part of the 50S ribosomal subunit. Contacts protein L32.

The protein is Large ribosomal subunit protein bL17 of Thioalkalivibrio sulfidiphilus (strain HL-EbGR7).